The sequence spans 77 residues: Large ribosomal subunit protein uL29 (77 aa).

It belongs to the universal ribosomal protein uL29 family.

The polypeptide is Large ribosomal subunit protein uL29 (Mycobacterium sp. (strain JLS)).